A 531-amino-acid chain; its full sequence is Doublesex- and mab-3-related transcription factor A2 (531 aa).

Residues 69–116 constitute a DNA-binding region (DM); sequence CARCRNHGVVSALKGHKRYCRWKDCLCAKCTLIAERQRVMAAQVALRR. Positions 197–312 are disordered; sequence LQAGRPDSPQ…GGPGPRQRTP (116 aa). The span at 274–285 shows a compositional bias: low complexity; it reads PGSSSPLGSESG. The DMA domain occupies 310–345; the sequence is RTPLDILTRVFPGHRRGVLELVLQGCGGDVVQAIEQ.

It belongs to the DMRT family. Expressed in adult brain and testis, as well as in embryonic ovary, kidney, heart, lung, stomach and brain.

The protein localises to the nucleus. In terms of biological role, may be involved in sexual development. The sequence is that of Doublesex- and mab-3-related transcription factor A2 (Dmrta2) from Mus musculus (Mouse).